We begin with the raw amino-acid sequence, 415 residues long: Esterase FrsA (415 aa).

The protein belongs to the FrsA family. In terms of assembly, monomer in solution. Homodimer. Forms a 1:1 complex with the unphosphorylated form of the EIIA component of the glucose-specific PTS system (IIAGlc).

The catalysed reaction is a carboxylic ester + H2O = an alcohol + a carboxylate + H(+). Its function is as follows. Catalyzes the hydrolysis of esters. In vitro, prefers short chain alkanoate ester as substrate. Displays highest activity towards p-nitrophenyl acetate (pNPA). Has weaker activity towards p-nitrophenyl butyrate (pNPB). This is Esterase FrsA from Vibrio vulnificus (strain CMCP6).